A 61-amino-acid chain; its full sequence is Large ribosomal subunit protein uL30 (61 aa).

The protein belongs to the universal ribosomal protein uL30 family. In terms of assembly, part of the 50S ribosomal subunit.

The chain is Large ribosomal subunit protein uL30 from Bordetella petrii (strain ATCC BAA-461 / DSM 12804 / CCUG 43448).